Consider the following 701-residue polypeptide: DNA ligase (701 aa).

The tract at residues 1–21 is disordered; that stretch reads MSAKSTPDAGPQEQATEAEAE. NAD(+)-binding positions include 50–54, 100–101, and Glu130; these read DADFD and SL. Lys132 functions as the N6-AMP-lysine intermediate in the catalytic mechanism. Residues Arg153, Glu193, Lys309, and Lys333 each contribute to the NAD(+) site. Cys427, Cys430, Cys446, and Cys452 together coordinate Zn(2+). The region spanning 616–701 is the BRCT domain; it reads SIARTLEGLS…LENGPQAPEG (86 aa).

Belongs to the NAD-dependent DNA ligase family. LigA subfamily. Requires Mg(2+) as cofactor. The cofactor is Mn(2+).

The catalysed reaction is NAD(+) + (deoxyribonucleotide)n-3'-hydroxyl + 5'-phospho-(deoxyribonucleotide)m = (deoxyribonucleotide)n+m + AMP + beta-nicotinamide D-nucleotide.. In terms of biological role, DNA ligase that catalyzes the formation of phosphodiester linkages between 5'-phosphoryl and 3'-hydroxyl groups in double-stranded DNA using NAD as a coenzyme and as the energy source for the reaction. It is essential for DNA replication and repair of damaged DNA. This chain is DNA ligase, found in Mycobacterium sp. (strain KMS).